We begin with the raw amino-acid sequence, 282 residues long: tRNA pseudouridine synthase B (282 aa).

Aspartate 39 acts as the Nucleophile in catalysis.

It belongs to the pseudouridine synthase TruB family. Type 1 subfamily.

The enzyme catalyses uridine(55) in tRNA = pseudouridine(55) in tRNA. Functionally, responsible for synthesis of pseudouridine from uracil-55 in the psi GC loop of transfer RNAs. The sequence is that of tRNA pseudouridine synthase B from Borrelia garinii subsp. bavariensis (strain ATCC BAA-2496 / DSM 23469 / PBi) (Borreliella bavariensis).